The following is a 276-amino-acid chain: Small ribosomal subunit protein uS2 (276 aa).

This sequence belongs to the universal ribosomal protein uS2 family.

The chain is Small ribosomal subunit protein uS2 from Chlamydia abortus (strain DSM 27085 / S26/3) (Chlamydophila abortus).